A 1337-amino-acid polypeptide reads, in one-letter code: C-Jun-amino-terminal kinase-interacting protein 3 (1337 aa).

Residues 12-100 (VVVYQDDYCS…LTQYEREKAL (89 aa)) form the RH1 domain. Residues 50-80 (EVVKELMPLVVNVLENLDSVLSENQEHEVEL) are kinesin-binding domain (KBD); essential for its function in axon elongation. The stretch at 58-177 (LVVNVLENLD…HTEMIQTYVE (120 aa)) forms a coiled coil. Disordered stretches follow at residues 183-211 (KMQQ…SLNV) and 245-285 (SSSY…PSAA). The segment covering 184–198 (MQQVGGSGQTESSLP) has biased composition (polar residues). Positions 210 to 226 (NVFPLADGMVRAQMGGK) are JNK-binding domain (JBD); essential for its function in axon elongation. Positions 261 to 270 (SSAAATPSTT) are enriched in low complexity. Phosphothreonine; by MAPK is present on residues threonine 266, threonine 276, and threonine 287. Over residues 271–282 (GTKSNTPTSSVP) the composition is skewed to polar residues. Serine 315 and serine 365 each carry phosphoserine; by ROCK1. Serine 366 bears the Phosphoserine mark. The tract at residues 424–459 (LLLENSQLLETKNALNVVKNDLIAKVDQLSGEQEVL) is leucine zipper-like domain (LZ); essential for its function in axon elongation. The stretch at 437–555 (ALNVVKNDLI…LQEAVRWTEM (119 aa)) forms a coiled coil. The interaction with NTRK2 stretch occupies residues 459-515 (LKGELEAAKQAKVKLENRIKELEEELKRVKSEAVTARREPREEVEDVSSYLCTELDK). Residues 521-595 (RRRFTRVEMA…SPPPAKRSYP (75 aa)) enclose the RH2 domain. Phosphoserine is present on serine 603. Residues 633 to 655 (DDCTSSARREQKREQYRQVREHV) are disordered. A compositionally biased stretch (basic and acidic residues) spans 639–655 (ARREQKREQYRQVREHV). A Phosphoserine modification is found at serine 677. Disordered regions lie at residues 719-772 (WKPH…ATSS) and 859-966 (PRSN…TTTS). A compositionally biased stretch (basic and acidic residues) spans 739–765 (LTCDREGEGEPKSTHPSPEKKKAKETP). 2 stretches are compositionally biased toward polar residues: residues 879–892 (VATT…PSQS) and 941–952 (ENGSESNGTIVQ).

Belongs to the JIP scaffold family. In terms of assembly, forms homo- or heterooligomeric complexes. The central region of MAPK8IP3 interacts with the C-terminal of MAPK8IP2 but not MAPK8IP1. Binds specific components of the JNK signaling pathway namely MAPK8/JNK1, MAPK9/JNK2 and MAPK10/JNK3 to the N-terminal region, MAP2K4/MKK4 and MAP2K7/MKK7 to the central region and MAP3K11 to the C-terminal region. Binds the TPR motif-containing C-terminal of kinesin light chain, KLC1. Pre-assembled MAPK8IP1 scaffolding complexes are then transported as a cargo of kinesin, to the required subcellular location. Interacts with ROCK1 and this interaction is enhanced by ultraviolet-B (UVB) radiation. Interacts with SH3RF2. Interacts with NTRK2/TRKB and NTRK3/TRKC. Phosphorylation by ROCK1 is crucial for the recruitment of JNK. In terms of tissue distribution, highly expressed throughout many regions of the brain and at lower levels in the heart, liver, lung, testes and kidney. All isoforms have been identified in the brain, isoform 1a is also expressed in the spleen and lung.

Its subcellular location is the cytoplasm. It is found in the golgi apparatus. The protein resides in the cytoplasmic vesicle. The protein localises to the cell projection. It localises to the growth cone. Its subcellular location is the axon. It is found in the dendrite. The protein resides in the perinuclear region. Its function is as follows. The JNK-interacting protein (JIP) group of scaffold proteins selectively mediates JNK signaling by aggregating specific components of the MAPK cascade to form a functional JNK signaling module. May function as a regulator of vesicle transport, through interactions with the JNK-signaling components and motor proteins. Promotes neuronal axon elongation in a kinesin- and JNK-dependent manner. Activates cofilin at axon tips via local activation of JNK, thereby regulating filopodial dynamics and enhancing axon elongation. Its binding to kinesin heavy chains (KHC), promotes kinesin-1 motility along microtubules and is essential for axon elongation and regeneration. Regulates cortical neuronal migration by mediating NTRK2/TRKB anterograde axonal transport during brain development. Acts as an adapter that bridges the interaction between NTRK2/TRKB and KLC1 and drives NTRK2/TRKB axonal but not dendritic anterograde transport, which is essential for subsequent BDNF-triggered signaling and filopodia formation. The sequence is that of C-Jun-amino-terminal kinase-interacting protein 3 (Mapk8ip3) from Mus musculus (Mouse).